We begin with the raw amino-acid sequence, 529 residues long: Tyrosinase (529 aa).

Positions 1-18 (MFLFAMGLLLVILQPSTG) are cleaved as a signal peptide. Over 19-476 (QFPRVCANTQ…YLKQAHQIWP (458 aa)) the chain is Lumenal, melanosome. 3 N-linked (GlcNAc...) asparagine glycosylation sites follow: Asn-86, Asn-111, and Asn-161. His-180, His-202, and His-211 together coordinate Cu cation. Residues Asn-230 and Asn-290 are each glycosylated (N-linked (GlcNAc...) asparagine). The tract at residues 293-313 (SEGPILRNPGNNDKSRTPRLP) is disordered. N-linked (GlcNAc...) asparagine glycosylation is found at Asn-337 and Asn-356. Residues His-363 and His-367 each coordinate Cu cation. N-linked (GlcNAc...) asparagine glycosylation occurs at Asn-371. Position 390 (His-390) interacts with Cu cation. The helical transmembrane segment at 477 to 497 (WLVGAAVIGGIITAVLSGLIL) threads the bilayer. At 498–529 (ACRKKRKGTSPEIQPLLTESEDYNNVSYQSHF) the chain is on the cytoplasmic side.

This sequence belongs to the tyrosinase family. The cofactor is Cu(2+).

The protein resides in the melanosome membrane. Its subcellular location is the melanosome. It catalyses the reaction 2 L-dopa + O2 = 2 L-dopaquinone + 2 H2O. The catalysed reaction is L-tyrosine + O2 = L-dopaquinone + H2O. Its function is as follows. This is a copper-containing oxidase that functions in the formation of pigments such as melanins and other polyphenolic compounds. Catalyzes the initial and rate limiting step in the cascade of reactions leading to melanin production from tyrosine. In addition to hydroxylating tyrosine to DOPA (3,4-dihydroxyphenylalanine), also catalyzes the oxidation of DOPA to DOPA-quinone, and possibly the oxidation of DHI (5,6-dihydroxyindole) to indole-5,6 quinone. This is Tyrosinase (TYR) from Gallus gallus (Chicken).